The sequence spans 671 residues: MSEFQLVTRFEPAGDQPEAIRQLVEGIDAGLAHQTLLGVTGSGKTFSIANVISQIKRPTLVLAPNKTLAAQLYGEFKAFFPNNAVEYFVSYYDYYQPEAYVPSSDTFIEKDASINDHIEQMRLSATKALLERKDAIIVTTVSCIYGLGSPETYLRMVLHVDRGDKLDQRALLRRLADLQYTRNDMDFARATFRVRGDVIDIYPAESDLEAIRIELFDDEVESLSAFDPLTGEVIRKLPRFTFYPKSHYVTPRETLVEAMEGIKVELQERLEYLRSQNKLVEAQRLEQRTRFDLEMMLELGYCNGIENYSRYLSGRPSGAPPPTLFDYLPADALLVIDESHVSVPQVGAMYKGDRSRKETLVEYGFRLPSALDNRPMRFDEWEAISPQTIFVSATPGNYEAEHAGRIVEQVVRPTGLVDPQIEIRPALTQVDDLLSEIHKRAALEERVLVTTLTKRMSEDLTDYLSDHGVRVRYLHSDIDTVERVEIIRDLRLGTFDVLVGINLLREGLDMPEVSLVAILDADKEGFLRSDRSLIQTIGRAARNLNGRAILYADRITGSMERAIGETERRREKQIAFNLEHGITPKGVFKDVADIMEGATVPGSRSKKRKGMAKAAEESARYENELRSPSEINKRIRQLEEKMYQLARDLEFEAAAQMRDEIGKLRERLLAV.

In terms of domain architecture, Helicase ATP-binding spans 25-412; it reads EGIDAGLAHQ…AGRIVEQVVR (388 aa). 38-45 contributes to the ATP binding site; it reads GVTGSGKT. The Beta-hairpin motif lies at 91-114; that stretch reads YYDYYQPEAYVPSSDTFIEKDASI. The 154-residue stretch at 429 to 582 folds into the Helicase C-terminal domain; it reads QVDDLLSEIH…QIAFNLEHGI (154 aa). The segment at 601–625 is disordered; that stretch reads PGSRSKKRKGMAKAAEESARYENEL. Basic and acidic residues predominate over residues 614 to 625; that stretch reads AAEESARYENEL. Residues 632 to 667 enclose the UVR domain; the sequence is NKRIRQLEEKMYQLARDLEFEAAAQMRDEIGKLRER.

Belongs to the UvrB family. As to quaternary structure, forms a heterotetramer with UvrA during the search for lesions. Interacts with UvrC in an incision complex.

Its subcellular location is the cytoplasm. The UvrABC repair system catalyzes the recognition and processing of DNA lesions. A damage recognition complex composed of 2 UvrA and 2 UvrB subunits scans DNA for abnormalities. Upon binding of the UvrA(2)B(2) complex to a putative damaged site, the DNA wraps around one UvrB monomer. DNA wrap is dependent on ATP binding by UvrB and probably causes local melting of the DNA helix, facilitating insertion of UvrB beta-hairpin between the DNA strands. Then UvrB probes one DNA strand for the presence of a lesion. If a lesion is found the UvrA subunits dissociate and the UvrB-DNA preincision complex is formed. This complex is subsequently bound by UvrC and the second UvrB is released. If no lesion is found, the DNA wraps around the other UvrB subunit that will check the other stand for damage. The protein is UvrABC system protein B of Pseudomonas syringae pv. tomato (strain ATCC BAA-871 / DC3000).